A 617-amino-acid chain; its full sequence is Mitochondrial Rho GTPase 2 (617 aa).

The Cytoplasmic portion of the chain corresponds to 1–590 (MKRDVRILLL…LNGSDMSSTS (590 aa)). Residues 2-168 (KRDVRILLLG…FYYAQKAVLH (167 aa)) form the Miro 1 domain. Positions 16, 17, 18, and 19 each coordinate GTP. Position 18 (T18) interacts with Mg(2+). Position 57 (D57) interacts with Mg(2+). Residues S59, N118, K119, D121, A149, and K150 each coordinate GTP. 2 EF-hand domains span residues 184–219 (QCVR…CFGN) and 304–339 (LGHQ…LPYM). D197, D199, D201, E208, D317, D319, D321, and E328 together coordinate Ca(2+). A Miro 2 domain is found at 416-578 (RTVFLCKVIG…YSKLTWAAMY (163 aa)). GTP is bound by residues G428, G430, K431, and T432. Residues T432 and E474 each contribute to the Mg(2+) site. GTP contacts are provided by K528 and D530. The chain crosses the membrane as a helical; Anchor for type IV membrane protein span at residues 591 to 613 (FWLRVTLGATIAAMLGFALYRAF). Over 614 to 617 (SRHK) the chain is Mitochondrial intermembrane.

Belongs to the mitochondrial Rho GTPase family. Homodimer.

The protein resides in the mitochondrion outer membrane. The enzyme catalyses GTP + H2O = GDP + phosphate + H(+). It catalyses the reaction ATP + H2O = ADP + phosphate + H(+). It carries out the reaction UTP + H2O = UDP + phosphate + H(+). Functionally, atypical mitochondrial nucleoside-triphosphatase (NTPase) involved in mitochondrial trafficking. Probably involved in control of anterograde transport of mitochondria and their subcellular distribution. Can hydrolyze GTP, ATP and UTP. The chain is Mitochondrial Rho GTPase 2 (rhot2) from Danio rerio (Zebrafish).